A 388-amino-acid chain; its full sequence is Succinate--CoA ligase [ADP-forming] subunit beta (388 aa).

Residues 9-244 (KQLFARYGLP…QSQEDPREAQ (236 aa)) form the ATP-grasp domain. Residues Lys-46, 53–55 (GRG), Glu-99, Thr-102, and Glu-107 contribute to the ATP site. Mg(2+) is bound by residues Asn-199 and Asp-213. Substrate-binding positions include Asn-264 and 321–323 (GIV).

The protein belongs to the succinate/malate CoA ligase beta subunit family. As to quaternary structure, heterotetramer of two alpha and two beta subunits. Requires Mg(2+) as cofactor.

It catalyses the reaction succinate + ATP + CoA = succinyl-CoA + ADP + phosphate. The catalysed reaction is GTP + succinate + CoA = succinyl-CoA + GDP + phosphate. It participates in carbohydrate metabolism; tricarboxylic acid cycle; succinate from succinyl-CoA (ligase route): step 1/1. In terms of biological role, succinyl-CoA synthetase functions in the citric acid cycle (TCA), coupling the hydrolysis of succinyl-CoA to the synthesis of either ATP or GTP and thus represents the only step of substrate-level phosphorylation in the TCA. The beta subunit provides nucleotide specificity of the enzyme and binds the substrate succinate, while the binding sites for coenzyme A and phosphate are found in the alpha subunit. The polypeptide is Succinate--CoA ligase [ADP-forming] subunit beta (Salmonella arizonae (strain ATCC BAA-731 / CDC346-86 / RSK2980)).